A 693-amino-acid chain; its full sequence is Elongation factor G (693 aa).

The tr-type G domain maps to 8 to 282 (EKTRNIGIMA…AVIDYLPSPL (275 aa)). GTP is bound by residues 17-24 (AHIDAGKT), 81-85 (DTPGH), and 135-138 (NKMD).

Belongs to the TRAFAC class translation factor GTPase superfamily. Classic translation factor GTPase family. EF-G/EF-2 subfamily.

Its subcellular location is the cytoplasm. Catalyzes the GTP-dependent ribosomal translocation step during translation elongation. During this step, the ribosome changes from the pre-translocational (PRE) to the post-translocational (POST) state as the newly formed A-site-bound peptidyl-tRNA and P-site-bound deacylated tRNA move to the P and E sites, respectively. Catalyzes the coordinated movement of the two tRNA molecules, the mRNA and conformational changes in the ribosome. In Staphylococcus aureus (strain Mu3 / ATCC 700698), this protein is Elongation factor G.